A 254-amino-acid chain; its full sequence is Citrate synthase-lysine N-methyltransferase CSKMT, mitochondrial (254 aa).

The transit peptide at 1 to 45 (MLLNRFLVPLRSLQKLTQARRWHQTSLINDLVVNMDKKAMWDRFY) directs the protein to the mitochondrion.

Belongs to the methyltransferase superfamily.

The protein resides in the mitochondrion. It carries out the reaction L-lysyl-[citrate synthase] + S-adenosyl-L-methionine = N(6)-methyl-L-lysyl-[citrate synthase] + S-adenosyl-L-homocysteine + H(+). The enzyme catalyses N(6)-methyl-L-lysyl-[citrate synthase] + S-adenosyl-L-methionine = N(6),N(6)-dimethyl-L-lysyl-[citrate synthase] + S-adenosyl-L-homocysteine + H(+). It catalyses the reaction N(6),N(6)-dimethyl-L-lysyl-[citrate synthase] + S-adenosyl-L-methionine = N(6),N(6),N(6)-trimethyl-L-lysyl-[citrate synthase] + S-adenosyl-L-homocysteine + H(+). Its activity is regulated as follows. Citrate synthase-lysine methyltransferase activity is inhibited by S-adenosylhomocysteine (AdoHcy) and oxaloacetate (OAA). Functionally, protein-lysine methyltransferase that selectively trimethylates citrate synthase (CS) in mitochondria. Seems to conduct trimethylation in a highly distributive manner rather than in a processive manner, and thus introduces a single methyl group per binding event. In Danio rerio (Zebrafish), this protein is Citrate synthase-lysine N-methyltransferase CSKMT, mitochondrial.